The following is a 1179-amino-acid chain: ATP-dependent helicase/deoxyribonuclease subunit B (1179 aa).

Belongs to the helicase family. AddB/RexB type 2 subfamily. Heterodimer of AddA and RexB. Mg(2+) is required as a cofactor.

Its function is as follows. The heterodimer acts as both an ATP-dependent DNA helicase and an ATP-dependent, dual-direction single-stranded exonuclease. Recognizes the chi site generating a DNA molecule suitable for the initiation of homologous recombination. This subunit has 5' -&gt; 3' nuclease activity but not helicase activity. The chain is ATP-dependent helicase/deoxyribonuclease subunit B from Lactobacillus delbrueckii subsp. bulgaricus (strain ATCC BAA-365 / Lb-18).